A 254-amino-acid polypeptide reads, in one-letter code: Ribonuclease PH (254 aa).

Phosphate-binding positions include arginine 86 and 124–126; that span reads GTR.

The protein belongs to the RNase PH family. In terms of assembly, homohexameric ring arranged as a trimer of dimers.

The catalysed reaction is tRNA(n+1) + phosphate = tRNA(n) + a ribonucleoside 5'-diphosphate. Phosphorolytic 3'-5' exoribonuclease that plays an important role in tRNA 3'-end maturation. Removes nucleotide residues following the 3'-CCA terminus of tRNAs; can also add nucleotides to the ends of RNA molecules by using nucleoside diphosphates as substrates, but this may not be physiologically important. Probably plays a role in initiation of 16S rRNA degradation (leading to ribosome degradation) during starvation. The protein is Ribonuclease PH of Carboxydothermus hydrogenoformans (strain ATCC BAA-161 / DSM 6008 / Z-2901).